The sequence spans 2017 residues: Rootletin (2017 aa).

Coiled coils occupy residues alanine 70–asparagine 262 and glutamate 318–glutamate 444. The segment covering serine 464 to serine 483 has biased composition (polar residues). The segment at serine 464 to serine 518 is disordered. Residues serine 499–proline 513 are compositionally biased toward low complexity. Coiled-coil stretches lie at residues glutamine 546–serine 1058 and glutamate 1091–serine 1438. Disordered stretches follow at residues leucine 1184–valine 1226 and glycine 1443–serine 1575. A phosphoserine mark is found at serine 1460, serine 1470, serine 1476, serine 1483, serine 1486, serine 1490, and serine 1496. Residues glutamate 1505–glutamine 1704 adopt a coiled-coil conformation. The segment covering alanine 1510–arginine 1529 has biased composition (basic and acidic residues). Phosphoserine occurs at positions 1575 and 1660. Residues arginine 1962 to lysine 2017 form a disordered region. A compositionally biased stretch (polar residues) spans glutamine 1989–glutamine 1999. The segment covering phenylalanine 2008–lysine 2017 has biased composition (pro residues).

It belongs to the rootletin family. As to quaternary structure, homomer. Interacts with KLC3, NEK2 and the N-terminus of CEP250. Interacts with CEP44. Interacts with CCDC102B (via N-terminus). Post-translationally, phosphorylated by NEK2 which may regulate its association with centrosomes.

The protein localises to the cytoplasm. It is found in the cytoskeleton. The protein resides in the microtubule organizing center. It localises to the centrosome. Its subcellular location is the centriole. The protein localises to the cilium basal body. Its function is as follows. Major structural component of the ciliary rootlet, a cytoskeletal-like structure in ciliated cells which originates from the basal body at the proximal end of a cilium and extends proximally toward the cell nucleus. Furthermore, is required for the correct positioning of the cilium basal body relative to the cell nucleus, to allow for ciliogenesis. Contributes to centrosome cohesion before mitosis. The sequence is that of Rootletin from Homo sapiens (Human).